Consider the following 375-residue polypeptide: MFSVIKNDKHFNARVGFLNLPHGRVDIPCFMPVGTLGAMKGLKHAVLEKLECNLMLANTYHLYLRLGIKTVEKYVGLHNFTTWNKNFLTDSGGFRVFSFSDLRKIDLKGVHFKFHIDGSYHYFTSEGIFAMQEIFGSDIIMPLDICSSYGIDYNEANLYTNITTNWASSTFKSSKNRKEGYNGLLFLITQGNFFKDLRKRSINDILELDSPGIAIGGISVGEPREKYLEILEYSFLLIPKEKPRYVMGIGTPHYILNAIYYGIDIFDCFNPARITRHGSLLTDNGIMCIGRKEYKDDTSKVEKNCICTLCKRYSRGYLRHLIKSKELFGIVLASEHNIHYMFRLISKIRAAILNDDFLNFRTSYLKKYEEENFDE.

Catalysis depends on Asp-90, which acts as the Proton acceptor. Substrate is bound by residues 90-94 (DSGGF), Asp-144, Gln-190, and Gly-217. The RNA binding stretch occupies residues 248-254 (GIGTPHY). The active-site Nucleophile is Asp-267. The tract at residues 272–276 (ARITR) is RNA binding; important for wobble base 34 recognition. 4 residues coordinate Zn(2+): Cys-305, Cys-307, Cys-310, and His-336.

This sequence belongs to the queuine tRNA-ribosyltransferase family. As to quaternary structure, homodimer. Within each dimer, one monomer is responsible for RNA recognition and catalysis, while the other monomer binds to the replacement base PreQ1. The cofactor is Zn(2+).

The enzyme catalyses 7-aminomethyl-7-carbaguanine + guanosine(34) in tRNA = 7-aminomethyl-7-carbaguanosine(34) in tRNA + guanine. Its pathway is tRNA modification; tRNA-queuosine biosynthesis. Functionally, catalyzes the base-exchange of a guanine (G) residue with the queuine precursor 7-aminomethyl-7-deazaguanine (PreQ1) at position 34 (anticodon wobble position) in tRNAs with GU(N) anticodons (tRNA-Asp, -Asn, -His and -Tyr). Catalysis occurs through a double-displacement mechanism. The nucleophile active site attacks the C1' of nucleotide 34 to detach the guanine base from the RNA, forming a covalent enzyme-RNA intermediate. The proton acceptor active site deprotonates the incoming PreQ1, allowing a nucleophilic attack on the C1' of the ribose to form the product. After dissociation, two additional enzymatic reactions on the tRNA convert PreQ1 to queuine (Q), resulting in the hypermodified nucleoside queuosine (7-(((4,5-cis-dihydroxy-2-cyclopenten-1-yl)amino)methyl)-7-deazaguanosine). In Borreliella burgdorferi (strain ZS7) (Borrelia burgdorferi), this protein is Queuine tRNA-ribosyltransferase.